The primary structure comprises 510 residues: Proline--tRNA ligase 2 (510 aa).

The protein belongs to the class-II aminoacyl-tRNA synthetase family. ProS type 3 subfamily. As to quaternary structure, homodimer.

The protein resides in the cytoplasm. The enzyme catalyses tRNA(Pro) + L-proline + ATP = L-prolyl-tRNA(Pro) + AMP + diphosphate. Its function is as follows. Catalyzes the attachment of proline to tRNA(Pro) in a two-step reaction: proline is first activated by ATP to form Pro-AMP and then transferred to the acceptor end of tRNA(Pro). This is Proline--tRNA ligase 2 from Anaeromyxobacter dehalogenans (strain 2CP-C).